Here is a 322-residue protein sequence, read N- to C-terminus: Protein-methionine-sulfoxide reductase catalytic subunit MsrP (322 aa).

Positions 1 to 59 (MSFRDALNLPSSEITDESVYRDRRRLLQLLALTPALGVAGCAEADPPPPPKTVVTPAQA) form a signal peptide, tat-type signal. Mo-molybdopterin contacts are provided by residues N79, 82–83 (YE), C137, T172, N220, R225, and 236–238 (SIK).

Belongs to the MsrP family. As to quaternary structure, heterodimer of a catalytic subunit (MsrP) and a heme-binding subunit (MsrQ). The cofactor is Mo-molybdopterin. Post-translationally, predicted to be exported by the Tat system. The position of the signal peptide cleavage has not been experimentally proven.

Its subcellular location is the periplasm. It catalyses the reaction L-methionyl-[protein] + a quinone + H2O = L-methionyl-(S)-S-oxide-[protein] + a quinol. It carries out the reaction L-methionyl-[protein] + a quinone + H2O = L-methionyl-(R)-S-oxide-[protein] + a quinol. Functionally, part of the MsrPQ system that repairs oxidized periplasmic proteins containing methionine sulfoxide residues (Met-O), using respiratory chain electrons. Thus protects these proteins from oxidative-stress damage caused by reactive species of oxygen and chlorine generated by the host defense mechanisms. MsrPQ is essential for the maintenance of envelope integrity under bleach stress, rescuing a wide series of structurally unrelated periplasmic proteins from methionine oxidation. The catalytic subunit MsrP is non-stereospecific, being able to reduce both (R-) and (S-) diastereoisomers of methionine sulfoxide. The protein is Protein-methionine-sulfoxide reductase catalytic subunit MsrP of Xanthomonas axonopodis pv. citri (strain 306).